The chain runs to 382 residues: Mitogen-activated protein kinase 9 (382 aa).

Positions 26 to 321 (YQQLKPIGSG…VDEALRHPYI (296 aa)) constitute a Protein kinase domain. Residues 33 to 38 (GSGAQG) and lysine 55 contribute to the ATP site. Residue aspartate 151 is the Proton acceptor of the active site. Threonine 183 carries the phosphothreonine modification. A TXY motif is present at residues 183-185 (TPY). Phosphotyrosine is present on tyrosine 185.

The protein belongs to the protein kinase superfamily. CMGC Ser/Thr protein kinase family. MAP kinase subfamily. Mg(2+) serves as cofactor. In terms of processing, dually phosphorylated on Thr-183 and Tyr-185, which activates the enzyme. In terms of tissue distribution, expressed in the neuroepithelium of developing brain at stages 16 to 26.

The catalysed reaction is L-seryl-[protein] + ATP = O-phospho-L-seryl-[protein] + ADP + H(+). The enzyme catalyses L-threonyl-[protein] + ATP = O-phospho-L-threonyl-[protein] + ADP + H(+). Its activity is regulated as follows. Activated by threonine and tyrosine phosphorylation. Functionally, responds to activation by environmental stress and pro-inflammatory cytokines by phosphorylating a number of transcription factors, primarily components of AP-1 such as JUN and ATF2 and thus regulates AP-1 transcriptional activity. May play a role in the development of the central nervous system during embryogenesis. May play a role in the regulation of the circadian clock. The chain is Mitogen-activated protein kinase 9 (MAPK9) from Gallus gallus (Chicken).